The chain runs to 330 residues: Beta-ketoacyl-[acyl-carrier-protein] synthase III (330 aa).

Catalysis depends on residues C114 and H257. An ACP-binding region spans residues Q258–R262. N287 is a catalytic residue.

This sequence belongs to the thiolase-like superfamily. FabH family. As to quaternary structure, homodimer.

It localises to the cytoplasm. The catalysed reaction is malonyl-[ACP] + acetyl-CoA + H(+) = 3-oxobutanoyl-[ACP] + CO2 + CoA. It functions in the pathway lipid metabolism; fatty acid biosynthesis. Its function is as follows. Catalyzes the condensation reaction of fatty acid synthesis by the addition to an acyl acceptor of two carbons from malonyl-ACP. Catalyzes the first condensation reaction which initiates fatty acid synthesis and may therefore play a role in governing the total rate of fatty acid production. Possesses both acetoacetyl-ACP synthase and acetyl transacylase activities. Its substrate specificity determines the biosynthesis of branched-chain and/or straight-chain of fatty acids. The chain is Beta-ketoacyl-[acyl-carrier-protein] synthase III from Nitratidesulfovibrio vulgaris (strain ATCC 29579 / DSM 644 / CCUG 34227 / NCIMB 8303 / VKM B-1760 / Hildenborough) (Desulfovibrio vulgaris).